A 100-amino-acid chain; its full sequence is Integration host factor subunit beta (100 aa).

This sequence belongs to the bacterial histone-like protein family. In terms of assembly, heterodimer of an alpha and a beta chain.

In terms of biological role, this protein is one of the two subunits of integration host factor, a specific DNA-binding protein that functions in genetic recombination as well as in transcriptional and translational control. The polypeptide is Integration host factor subunit beta (Agrobacterium fabrum (strain C58 / ATCC 33970) (Agrobacterium tumefaciens (strain C58))).